The following is a 333-amino-acid chain: Sphingomyelinase C (333 aa).

Positions methionine 1–alanine 27 are cleaved as a signal peptide. A disulfide bridge links cysteine 150 with cysteine 186.

The protein belongs to the neutral sphingomyelinase family. Mg(2+) serves as cofactor.

It localises to the secreted. It catalyses the reaction a sphingomyelin + H2O = phosphocholine + an N-acylsphing-4-enine + H(+). Its activity is regulated as follows. Activated by cobalt and manganese ions. Required, with sphingomyelinase, to effect target cell lysis (hemolysis). The polypeptide is Sphingomyelinase C (sph) (Bacillus cereus).